Here is a 248-residue protein sequence, read N- to C-terminus: Ubiquinone/menaquinone biosynthesis C-methyltransferase UbiE (248 aa).

S-adenosyl-L-methionine-binding residues include S68 and D92.

Belongs to the class I-like SAM-binding methyltransferase superfamily. MenG/UbiE family.

It catalyses the reaction a 2-demethylmenaquinol + S-adenosyl-L-methionine = a menaquinol + S-adenosyl-L-homocysteine + H(+). The enzyme catalyses a 2-methoxy-6-(all-trans-polyprenyl)benzene-1,4-diol + S-adenosyl-L-methionine = a 5-methoxy-2-methyl-3-(all-trans-polyprenyl)benzene-1,4-diol + S-adenosyl-L-homocysteine + H(+). It functions in the pathway quinol/quinone metabolism; menaquinone biosynthesis; menaquinol from 1,4-dihydroxy-2-naphthoate: step 2/2. It participates in cofactor biosynthesis; ubiquinone biosynthesis. Functionally, methyltransferase required for the conversion of demethylmenaquinol (DMKH2) to menaquinol (MKH2) and the conversion of 2-polyprenyl-6-methoxy-1,4-benzoquinol (DDMQH2) to 2-polyprenyl-3-methyl-6-methoxy-1,4-benzoquinol (DMQH2). This chain is Ubiquinone/menaquinone biosynthesis C-methyltransferase UbiE, found in Rickettsia akari (strain Hartford).